The chain runs to 397 residues: Stearoyl-[acyl-carrier-protein] 9-desaturase, chloroplastic (397 aa).

A chloroplast-targeting transit peptide spans 1 to 33; that stretch reads MALNFNAIASKSQKLPCFALPPKATLRSPKFSM. E138, E176, H179, E229, E262, and H265 together coordinate Fe cation.

Belongs to the fatty acid desaturase type 2 family. As to quaternary structure, homodimer. The cofactor is Fe(2+).

It is found in the plastid. It localises to the chloroplast. It catalyses the reaction octadecanoyl-[ACP] + 2 reduced [2Fe-2S]-[ferredoxin] + O2 + 2 H(+) = (9Z)-octadecenoyl-[ACP] + 2 oxidized [2Fe-2S]-[ferredoxin] + 2 H2O. It functions in the pathway lipid metabolism; fatty acid metabolism. In terms of biological role, converts stearoyl-ACP to oleoyl-ACP by introduction of a cis double bond between carbons 9 and 10 of the acyl chain. In Gossypium hirsutum (Upland cotton), this protein is Stearoyl-[acyl-carrier-protein] 9-desaturase, chloroplastic.